Reading from the N-terminus, the 568-residue chain is N66 matrix protein (568 aa).

Residues 1 to 22 (MWRMTTLLHLTALLVLIPLCHC) form the signal peptide. The 513-residue stretch at 55–567 (AGFSYNRDIC…KHPLRVYKNS (513 aa)) folds into the Alpha-carbonic anhydrase domain. Zn(2+)-binding residues include histidine 154, histidine 156, and histidine 179. The tract at residues 259–421 (NGNNGNNGNG…NGYNGDNGNS (163 aa)) is disordered. Positions 280–290 (GNNGNGNGNNG) are enriched in gly residues. A compositionally biased stretch (low complexity) spans 291 to 318 (YNGNNGYNGNNGNNGNGNNDNNGNDNNG). Gly residues-rich tracts occupy residues 319 to 352 (NNGG…GNNG) and 362 to 380 (NGNG…GNNG). Residue asparagine 389 is glycosylated (N-linked (GlcNAc...) asparagine). Residues 390–413 (GSNGNNGGNGNNGNNGDNGNGDNG) are compositionally biased toward gly residues. 506-507 (TT) is a substrate binding site. A glycan (N-linked (GlcNAc...) asparagine) is linked at asparagine 511.

It belongs to the alpha-carbonic anhydrase family. As to quaternary structure, homooligomer; disulfide-linked. May also be disulfide-linked to insoluble organic matrix. Zn(2+) serves as cofactor. As to expression, expressed in both the dorsal region of the mantle and the mantle edge. Is dispersed in calcium carbonate and also linked by disulfide bonds to the organic core of nacre.

It localises to the secreted. It is found in the extracellular space. The protein resides in the extracellular matrix. It catalyses the reaction hydrogencarbonate + H(+) = CO2 + H2O. Acts as a negative regulator for calcification in the shells of mollusks. May function both as a calcium concentrator and as a carbonic anhydrase required for production of carbonate ions, which are assembled to CaCO(3) at mineralization sites. Is important for shell formation in both the calcitic prismatic layer and the aragonitic nacreous layer. The polypeptide is N66 matrix protein (Pinctada maxima (Silver-lipped pearl oyster)).